A 419-amino-acid chain; its full sequence is Tetraspanning orphan receptor (419 aa).

Topologically, residues 1–28 (MPRAPALLTNDARHQFTCCLCLHVRTGT) are cytoplasmic. A helical transmembrane segment spans residues 29-49 (IIFGITQIIIQLVFISFLFLM). Residues 50-165 (TFNPRLIPED…EVKIKHFSPY (116 aa)) lie on the Extracellular side of the membrane. The helical transmembrane segment at 166–186 (IAVCVTTFSLAFCCFMVHGAI) threads the bilayer. Over 187–193 (TKQPTHL) the chain is Cytoplasmic. Residues 194 to 214 (LPFFFIQVFDLIICLIHILGF) form a helical membrane-spanning segment. Residues 215–240 (MSSTSDLRLMIHTKTGPIYIKSTGFT) are Extracellular-facing. A helical transmembrane segment spans residues 241 to 261 (FIILSISCMMLAFKAYCLGMV). The Cytoplasmic segment spans residues 262 to 419 (WDCYKYLMLN…SAPSNAHSSC (158 aa)). Low complexity predominate over residues 303-316 (NNSIGNSGSPNEPN). A disordered region spans residues 303–328 (NNSIGNSGSPNEPNTRPRPEPITYDP).

As to quaternary structure, interacts (via N-terminal extracellular domain) with human C2a. Phosphorylated on tyrosine residues.

Its subcellular location is the cell membrane. Its function is as follows. Cell surface receptor that binds to human complement C2a protein. This results in inhibition of the classical and lectin pathways of complement activation, probably due to interference with binding of C2a to C4b and interference with cleavage by C1 or MASP2 such that C3 convertase cannot be formed. This infers resistance to complement-mediated cell lysis, allowing parasite survival and infection. The polypeptide is Tetraspanning orphan receptor (Schistosoma mansoni (Blood fluke)).